A 495-amino-acid chain; its full sequence is UDP-glycosyltransferase 73C6 (495 aa).

Residues serine 296, 356-358 (SPQ), 373-381 (HCGWNSTLE), and 395-398 (FADQ) contribute to the UDP-alpha-D-glucose site. A disordered region spans residues 449 to 475 (SDDAKERRRRAKELGESAHKAVEEGGS). Residues 450 to 471 (DDAKERRRRAKELGESAHKAVE) show a composition bias toward basic and acidic residues.

The protein belongs to the UDP-glycosyltransferase family. As to expression, expressed in leaves and flowers, and at a very low level in roots.

Its function is as follows. Acts as a UDP-glucose:flavonol-3-O-glycoside-7-O-glucosyltransferase. 6- and 7-hydroxyflavone, but not 3- or 5-hydroxyflavone are accepted as substrates. Possesses low quercetin 3-O-glucosyltransferase, 7-O-glucosyltransferase and 4'-O-glucosyltransferase activities in vitro. This chain is UDP-glycosyltransferase 73C6 (UGT73C6), found in Arabidopsis thaliana (Mouse-ear cress).